A 160-amino-acid polypeptide reads, in one-letter code: Thialysine N-epsilon-acetyltransferase (160 aa).

The N-acetyltransferase domain occupies 4-159 (FEIVTVTPDH…DGAAINKFAD (156 aa)). Acetyl-CoA contacts are provided by residues 84–86 (LYI), 92–97 (RMGLAR), 123–126 (NKNA), and 130–133 (YDTV).

Belongs to the acetyltransferase family. As to quaternary structure, homodimer.

The catalysed reaction is S-(2-aminoethyl)-L-cysteine + acetyl-CoA = S-(2-acetamidoethyl)-L-cysteine + CoA + H(+). It catalyses the reaction O-(2-aminoethyl)-L-serine + acetyl-CoA = O-(2-acetamidoethyl)-L-serine + CoA + H(+). The enzyme catalyses S-(2-aminoethyl)-homocysteine + acetyl-CoA = S-(2-acetamidoethyl)-homocysteine + CoA + H(+). Functionally, catalyzes the N-acetylation of the amino acid thialysine (S-(2-aminoethyl)-L-cysteine), a L-lysine analog with the 4-methylene group substituted with a sulfur. Substrate specificity: thialysine &gt; O-(2-aminoethyl)-L-serine &gt; S-(2-aminoethyl)-D,L-homocysteine. Does not act on polyamines, such as spermidine and spermine, nor on diamines putrescine and cadaverine. The polypeptide is Thialysine N-epsilon-acetyltransferase (Caenorhabditis elegans).